Reading from the N-terminus, the 156-residue chain is Nucleoredoxin-like protein 2 (156 aa).

One can recognise a Thioredoxin domain in the interval 9–147; the sequence is RLVTREGTVV…LACFQNWVEA (139 aa).

It belongs to the nucleoredoxin family. In terms of tissue distribution, both isoforms are expressed in retina, in the photoreceptor layer, and throughout the olfactory sensory neuron layer of the nasal epithelium, in neurons. Also expressed at low levels in brain and testis.

Functionally, may be involved in the maintenance of both the function and the viability of sensory neurons, including photoreceptors and olfactory neurons. In the retina, isoform 1 may be required for rod function and isoform 2 for cone viability and function. This is Nucleoredoxin-like protein 2 (Nxnl2) from Mus musculus (Mouse).